Consider the following 252-residue polypeptide: MIEWSDRGIVLAARPHGEDGVIVSLLSAGHGRHSGIVRGGRGKRLRAALQPGSLVQATWKARLEDHLGSLVVELLAGVAGGLLDDRDRLAALAAACALAETVLPERAPQADVYDATLALLDALAEGGEGTPLVWAGAFVRWEIGLLAALGFGLDLSCCAVSGECGDLAYVSPRSGRAVGREAGAPWQARLLALPAFLLSPAEVPANAQAVGDGLRLSGYFLEGHVLAPQGRGLPASRQRFVERLRRWSAADR.

The protein belongs to the RecO family.

Involved in DNA repair and RecF pathway recombination. The chain is DNA repair protein RecO from Rhodospirillum rubrum (strain ATCC 11170 / ATH 1.1.1 / DSM 467 / LMG 4362 / NCIMB 8255 / S1).